Reading from the N-terminus, the 654-residue chain is Probable Xaa-Pro aminopeptidase P (654 aa).

4 residues coordinate Mn(2+): D451, D462, E560, and E574.

It belongs to the peptidase M24B family. Requires Mn(2+) as cofactor.

It catalyses the reaction Release of any N-terminal amino acid, including proline, that is linked to proline, even from a dipeptide or tripeptide.. Its function is as follows. Catalyzes the removal of a penultimate prolyl residue from the N-termini of peptides. In Botryotinia fuckeliana (strain B05.10) (Noble rot fungus), this protein is Probable Xaa-Pro aminopeptidase P (ampp).